The sequence spans 199 residues: FMN-dependent NADH:quinone oxidoreductase 2 (199 aa).

FMN-binding positions include Ser-10, Ser-16–Ser-18, and Met-96–Phe-99.

Belongs to the azoreductase type 1 family. In terms of assembly, homodimer. Requires FMN as cofactor.

The catalysed reaction is 2 a quinone + NADH + H(+) = 2 a 1,4-benzosemiquinone + NAD(+). It carries out the reaction N,N-dimethyl-1,4-phenylenediamine + anthranilate + 2 NAD(+) = 2-(4-dimethylaminophenyl)diazenylbenzoate + 2 NADH + 2 H(+). Functionally, quinone reductase that provides resistance to thiol-specific stress caused by electrophilic quinones. In terms of biological role, also exhibits azoreductase activity. Catalyzes the reductive cleavage of the azo bond in aromatic azo compounds to the corresponding amines. This chain is FMN-dependent NADH:quinone oxidoreductase 2, found in Pseudomonas fluorescens (strain Pf0-1).